We begin with the raw amino-acid sequence, 132 residues long: Small ribosomal subunit protein uS8 (132 aa).

The protein belongs to the universal ribosomal protein uS8 family. In terms of assembly, part of the 30S ribosomal subunit. Contacts proteins S5 and S12.

One of the primary rRNA binding proteins, it binds directly to 16S rRNA central domain where it helps coordinate assembly of the platform of the 30S subunit. The polypeptide is Small ribosomal subunit protein uS8 (Bacillus velezensis (strain DSM 23117 / BGSC 10A6 / LMG 26770 / FZB42) (Bacillus amyloliquefaciens subsp. plantarum)).